The chain runs to 531 residues: Putative UDP-glucuronosyltransferase ugt-46 (531 aa).

Residues 1–17 (MRLIFVLLATFVNAAFS) form the signal peptide. N-linked (GlcNAc...) asparagine glycosylation is present at asparagine 304. A helical membrane pass occupies residues 493-513 (VIIPVFWLSISLVIPTIFGWY).

Belongs to the UDP-glycosyltransferase family.

The protein localises to the membrane. It catalyses the reaction glucuronate acceptor + UDP-alpha-D-glucuronate = acceptor beta-D-glucuronoside + UDP + H(+). This is Putative UDP-glucuronosyltransferase ugt-46 (ugt-46) from Caenorhabditis elegans.